Reading from the N-terminus, the 482-residue chain is MFS-type transporter cnsL (482 aa).

A helical transmembrane segment spans residues 73–93; it reads LFVCATLSGLDKTAISAAAVY. Asn-100 carries N-linked (GlcNAc...) asparagine glycosylation. 9 consecutive transmembrane segments (helical) span residues 108–128, 131–151, 170–190, 199–219, 304–324, 333–353, 361–381, 392–412, and 426–446; these read WIGS…AYCL, VPAV…EMSV, IILN…VGYY, IIFL…YFVL, LLAM…SYLA, AIVT…YALP, LVGL…VSVY, ITLY…GPQT, and VAMI…GVVC.

It belongs to the major facilitator superfamily. Allantoate permease family.

The protein resides in the cell membrane. MFS-type transporter; part of the gene cluster that mediates the biosynthesis of communesins, a prominent class of indole alkaloids with great potential as pharmaceuticals. With the MFS transporter cnsO, is most likely responsible for cummunesins secretion and thereby may contribute to intrinsic resistance. This chain is MFS-type transporter cnsL, found in Penicillium expansum (Blue mold rot fungus).